Here is a 217-residue protein sequence, read N- to C-terminus: Ribosomal RNA small subunit methyltransferase G (217 aa).

S-adenosyl-L-methionine-binding positions include Gly79, Leu84, 102-104 (DST), 130-131 (VE), and Arg144.

It belongs to the methyltransferase superfamily. RNA methyltransferase RsmG family.

Its subcellular location is the cytoplasm. Functionally, specifically methylates the N7 position of a guanine in 16S rRNA. The chain is Ribosomal RNA small subunit methyltransferase G from Chlorobaculum tepidum (strain ATCC 49652 / DSM 12025 / NBRC 103806 / TLS) (Chlorobium tepidum).